Consider the following 157-residue polypeptide: Probable Brix domain-containing ribosomal biogenesis protein (157 aa).

A Brix domain is found at 1–157; that stretch reads MLVTSSRKPS…KLNLRGFKKY (157 aa).

Probably involved in the biogenesis of the ribosome. In Methanosarcina barkeri (strain Fusaro / DSM 804), this protein is Probable Brix domain-containing ribosomal biogenesis protein.